Reading from the N-terminus, the 243-residue chain is Carboxy-S-adenosyl-L-methionine synthase (243 aa).

Residues tyrosine 40, glycine 65–serine 67, aspartate 90–asparagine 91, aspartate 118–isoleucine 119, asparagine 133, and arginine 200 each bind S-adenosyl-L-methionine.

The protein belongs to the class I-like SAM-binding methyltransferase superfamily. Cx-SAM synthase family. Homodimer.

The enzyme catalyses prephenate + S-adenosyl-L-methionine = carboxy-S-adenosyl-L-methionine + 3-phenylpyruvate + H2O. Functionally, catalyzes the conversion of S-adenosyl-L-methionine (SAM) to carboxy-S-adenosyl-L-methionine (Cx-SAM). The polypeptide is Carboxy-S-adenosyl-L-methionine synthase (Shewanella loihica (strain ATCC BAA-1088 / PV-4)).